A 122-amino-acid polypeptide reads, in one-letter code: Large ribosomal subunit protein uL14 (122 aa).

Belongs to the universal ribosomal protein uL14 family. As to quaternary structure, part of the 50S ribosomal subunit. Forms a cluster with proteins L3 and L19. In the 70S ribosome, L14 and L19 interact and together make contacts with the 16S rRNA in bridges B5 and B8.

Its function is as follows. Binds to 23S rRNA. Forms part of two intersubunit bridges in the 70S ribosome. In Helicobacter hepaticus (strain ATCC 51449 / 3B1), this protein is Large ribosomal subunit protein uL14.